The chain runs to 285 residues: MARCO-like protein (285 aa).

An N-terminal signal peptide occupies residues 1 to 20; the sequence is MRAFIFFLFMLLAMFSASST. N-linked (GlcNAc...) asparagine glycosylation is present at N24. 2 disordered regions span residues 47–77 and 91–285; these read NHLGGQRDSNKQGGSYTQGNPGTFRLQGQPG and GRAG…QGNL. Composition is skewed to polar residues over residues 57-67 and 105-114; these read KQGGSYTQGNP and SGKSNQKGNP. Low complexity predominate over residues 115–128; the sequence is ESSNKQENSGSSSQ. A compositionally biased stretch (polar residues) spans 134 to 145; that stretch reads ISTQQGNPGSSD. Positions 160 to 173 are enriched in low complexity; the sequence is GSSSQQGKPGSSSQ. Over residues 174–185 the composition is skewed to polar residues; sequence HGNLGSSTQKGN. Positions 186–220 are enriched in low complexity; sequence LGSSSLQGHLGLSSHQGKPESSGQQGKPGSSSQQG. Positions 221–285 are enriched in polar residues; sequence NLGTSGQQEK…PGSSSRQGNL (65 aa).

This is MARCO-like protein from Homo sapiens (Human).